The following is a 484-amino-acid chain: MNWEIVIGLETHTQLSTDSKIFSGSSTRFGAAPNTQANAVDLALPGSLPVMNRGAAERAILFGLAVGGKVAPRSVFARKNYFYPDLPKGYQISQYELPVVEGGTLSFFVGEEEKTVNLTRAHLEEDAGKSLHDEFSLASGAPASGIDLNRAGTPLLEIVTEPEMRSAAEAVAYARALHSLVVWLGICDGNMQEGSFRCDANVSVRPVGQKEFGTRTEIKNVNSFRFLERAILFEARRQIELIEDGGTVVQETRLYDADRDETRSMRSKEDAHDYRYFPDPDLPPLVIGQDWVDAVRAGMPELPTAQRARFEADYGLPAYDAAQLTVSRAMADYFEAVARALPAGQAKLAANWIMGEVAATLNREEKDIDAAPVSAAALATLINRIIDGTISNKIARDVFAAMWAGENGGDADAIIAARGLKQISDSGAIGAMIDEVLAANPAIVEEYRAGKQKAFNSLVGQIMKAAKGKANPQQVNELLKEKLG.

The protein belongs to the GatB/GatE family. GatB subfamily. Heterotrimer of A, B and C subunits.

It catalyses the reaction L-glutamyl-tRNA(Gln) + L-glutamine + ATP + H2O = L-glutaminyl-tRNA(Gln) + L-glutamate + ADP + phosphate + H(+). The catalysed reaction is L-aspartyl-tRNA(Asn) + L-glutamine + ATP + H2O = L-asparaginyl-tRNA(Asn) + L-glutamate + ADP + phosphate + 2 H(+). In terms of biological role, allows the formation of correctly charged Asn-tRNA(Asn) or Gln-tRNA(Gln) through the transamidation of misacylated Asp-tRNA(Asn) or Glu-tRNA(Gln) in organisms which lack either or both of asparaginyl-tRNA or glutaminyl-tRNA synthetases. The reaction takes place in the presence of glutamine and ATP through an activated phospho-Asp-tRNA(Asn) or phospho-Glu-tRNA(Gln). This is Aspartyl/glutamyl-tRNA(Asn/Gln) amidotransferase subunit B from Bordetella parapertussis (strain 12822 / ATCC BAA-587 / NCTC 13253).